Consider the following 246-residue polypeptide: Phosducin (246 aa).

Over residues 1–14 the composition is skewed to acidic residues; it reads MEEAASQSLEEDFE. The disordered stretch occupies residues 1 to 70; it reads MEEAASQSLE…DKDSKERMSR (70 aa). Positions 1-246 constitute a Phosducin domain; the sequence is MEEAASQSLE…QTNTEDEDIE (246 aa). The span at 58-69 shows a compositional bias: basic and acidic residues; it reads SRDDKDSKERMS. The residue at position 73 (Ser-73) is a Phosphoserine; by PKA. The segment at 111 to 246 is thioredoxin fold; it reads YGFVYELETG…QTNTEDEDIE (136 aa).

The protein belongs to the phosducin family. In terms of assembly, interacts with CRX. Forms a complex with the beta and gamma subunits of the GTP-binding protein, transducin. Post-translationally, light-induced changes in cyclic nucleotide levels modulate the phosphorylation of this protein by cAMP kinase.

Its subcellular location is the cytoplasm. It localises to the cytosol. It is found in the nucleus. The protein localises to the cell projection. The protein resides in the cilium. Its subcellular location is the photoreceptor outer segment. It localises to the photoreceptor inner segment. Inhibits the transcriptional activation activity of the cone-rod homeobox CRX. May participate in the regulation of visual phototransduction or in the integration of photoreceptor metabolism. In Rattus norvegicus (Rat), this protein is Phosducin (Pdc).